The primary structure comprises 74 residues: Exodeoxyribonuclease 7 small subunit (74 aa).

Belongs to the XseB family. Heterooligomer composed of large and small subunits.

It is found in the cytoplasm. It catalyses the reaction Exonucleolytic cleavage in either 5'- to 3'- or 3'- to 5'-direction to yield nucleoside 5'-phosphates.. Bidirectionally degrades single-stranded DNA into large acid-insoluble oligonucleotides, which are then degraded further into small acid-soluble oligonucleotides. The chain is Exodeoxyribonuclease 7 small subunit from Synechococcus elongatus (strain ATCC 33912 / PCC 7942 / FACHB-805) (Anacystis nidulans R2).